We begin with the raw amino-acid sequence, 729 residues long: Phosphoribosylformylglycinamidine synthase subunit PurL (729 aa).

His-54 is a catalytic residue. Residues Tyr-57 and Lys-96 each coordinate ATP. Glu-98 is a binding site for Mg(2+). Substrate contacts are provided by residues 99 to 102 and Arg-121; that span reads SHNH. Residue His-100 is the Proton acceptor of the active site. Position 122 (Asp-122) interacts with Mg(2+). Gln-245 serves as a coordination point for substrate. Asp-273 is a binding site for Mg(2+). 317–319 provides a ligand contact to substrate; it reads ETQ. ATP is bound by residues Asp-495 and Gly-532. Asn-533 provides a ligand contact to Mg(2+). Ser-535 contacts substrate.

This sequence belongs to the FGAMS family. Monomer. Part of the FGAM synthase complex composed of 1 PurL, 1 PurQ and 2 PurS subunits.

Its subcellular location is the cytoplasm. It carries out the reaction N(2)-formyl-N(1)-(5-phospho-beta-D-ribosyl)glycinamide + L-glutamine + ATP + H2O = 2-formamido-N(1)-(5-O-phospho-beta-D-ribosyl)acetamidine + L-glutamate + ADP + phosphate + H(+). It functions in the pathway purine metabolism; IMP biosynthesis via de novo pathway; 5-amino-1-(5-phospho-D-ribosyl)imidazole from N(2)-formyl-N(1)-(5-phospho-D-ribosyl)glycinamide: step 1/2. Its function is as follows. Part of the phosphoribosylformylglycinamidine synthase complex involved in the purines biosynthetic pathway. Catalyzes the ATP-dependent conversion of formylglycinamide ribonucleotide (FGAR) and glutamine to yield formylglycinamidine ribonucleotide (FGAM) and glutamate. The FGAM synthase complex is composed of three subunits. PurQ produces an ammonia molecule by converting glutamine to glutamate. PurL transfers the ammonia molecule to FGAR to form FGAM in an ATP-dependent manner. PurS interacts with PurQ and PurL and is thought to assist in the transfer of the ammonia molecule from PurQ to PurL. The chain is Phosphoribosylformylglycinamidine synthase subunit PurL from Staphylococcus aureus (strain bovine RF122 / ET3-1).